The sequence spans 597 residues: Apurinic-apyrimidinic endonuclease 1 (597 aa).

The span at 232-246 (YNNDTKYLSNPKGVT) shows a compositional bias: polar residues. Positions 232–296 (YNNDTKYLSN…IPPIPKNTED (65 aa)) are disordered. Residues 265–274 (NNNNNNNNNK) show a composition bias toward low complexity. Residues H380, H420, E456, D490, H493, H527, D540, H542, and E572 each contribute to the Zn(2+) site. A Mn(2+)-binding site is contributed by H493. 2 residues coordinate Mn(2+): D540 and H542.

It belongs to the AP endonuclease 2 family. The cofactor is Zn(2+). Mn(2+) is required as a cofactor. May be proteolytically cleaved into a 59 kDa form.

Its subcellular location is the mitochondrion. With respect to regulation, apurinic/apyrimidinic (AP) endonuclease activity is enhanced with increasing concentrations of Mn(2+), while Zn(2+) initially enhances activity but subsequently inhibits activity in a concentration-dependent manner. Co(2+) inhibits apurinic/apyrimidinic (AP) endonuclease activity at concentrations greater than 2.5 mM. In terms of biological role, plays a role in mitochondrial DNA base excision repair (BER) pathway induced by oxidative stress. Has apurinic/apyrimidinic (AP) endonuclease activity towards double-stranded DNA (dsDNA) with a preference for C as opposite base. Has 3'-phosphatase activity; removes 3'-phosphate from blunt-end, recessed, and gapped DNA templates and thus, removes 3'-blocks for DNA polymerase activity during BER. Lacks 3'-5' exonuclease activity and does not cleave damaged bases by nucleotide incision repair (NIR). The protein is Apurinic-apyrimidinic endonuclease 1 of Plasmodium falciparum (isolate 3D7).